A 546-amino-acid polypeptide reads, in one-letter code: Thermolysin (546 aa).

An N-terminal signal peptide occupies residues 1–25; the sequence is MDKRAMLGAIGLAFGLMAWPFGASA. Positions 26–228 are cleaved as a propeptide — activation peptide; it reads KEKSMVWNEQ…EAKPGGGQPV (203 aa). The Ca(2+) site is built by D287, D289, Q291, and D368. H372 is a binding site for Zn(2+). E373 is a catalytic residue. Zn(2+) contacts are provided by H376 and E396. 8 residues coordinate Ca(2+): N413, D415, E417, E420, Y423, T424, I427, and D430. H461 functions as the Proton donor in the catalytic mechanism.

It belongs to the peptidase M4 family. Ca(2+) is required as a cofactor. Requires Zn(2+) as cofactor.

It localises to the secreted. The catalysed reaction is Preferential cleavage: Xaa-|-Leu &gt; Xaa-|-Phe.. In terms of biological role, extracellular zinc metalloprotease. Has collagenase activity. The protein is Thermolysin (npr) of Bacillus sp. (strain EA1).